Reading from the N-terminus, the 184-residue chain is Inosine triphosphate pyrophosphatase (184 aa).

9–14 contributes to the ITP binding site; sequence TSNASK. A Mg(2+)-binding site is contributed by Glu38. ITP is bound by residues Lys50, 66 to 67, Lys83, 142 to 145, Lys163, and 168 to 169; these read DT, FGWD, and HR.

It belongs to the HAM1 NTPase family. Homodimer. The cofactor is Mg(2+). Mn(2+) serves as cofactor.

The protein resides in the cytoplasm. Its subcellular location is the nucleus. The catalysed reaction is ITP + H2O = IMP + diphosphate + H(+). It catalyses the reaction dITP + H2O = dIMP + diphosphate + H(+). The enzyme catalyses XTP + H2O = XMP + diphosphate + H(+). Functionally, pyrophosphatase that hydrolyzes non-canonical purine nucleotides such as inosine triphosphate (ITP), deoxyinosine triphosphate (dITP) or xanthosine 5'-triphosphate (XTP) to their respective monophosphate derivatives. The enzyme does not distinguish between the deoxy- and ribose forms. Probably excludes non-canonical purines from RNA and DNA precursor pools, thus preventing their incorporation into RNA and DNA and avoiding chromosomal lesions. The chain is Inosine triphosphate pyrophosphatase from Tuber melanosporum (strain Mel28) (Perigord black truffle).